The sequence spans 1505 residues: Probable serine/threonine-protein kinase irlD (1505 aa).

Over residues methionine 1–asparagine 18 the composition is skewed to basic residues. Disordered regions lie at residues methionine 1 to glycine 30, isoleucine 121 to leucine 211, threonine 548 to asparagine 571, and glutamate 862 to threonine 1013. Over residues serine 139–serine 158 the composition is skewed to low complexity. Positions glycine 159–leucine 172 are enriched in polar residues. Composition is skewed to low complexity over residues aspartate 173–asparagine 209 and threonine 548–threonine 561. Basic and acidic residues-rich tracts occupy residues isoleucine 562–asparagine 571 and glutamate 862–lysine 882. Positions isoleucine 846–isoleucine 892 form a coiled coil. A compositionally biased stretch (low complexity) spans threonine 896–glutamine 924. Positions threonine 925–isoleucine 943 are enriched in pro residues. Composition is skewed to low complexity over residues proline 944–threonine 954 and threonine 960–lysine 977. The segment covering asparagine 978 to proline 989 has biased composition (polar residues). A Protein kinase domain is found at arginine 1054–phenylalanine 1324. Residues isoleucine 1060–leucine 1068 and lysine 1083 each bind ATP. The Proton acceptor role is filled by aspartate 1194. The KEN domain occupies histidine 1327–lysine 1505.

This sequence belongs to the protein kinase superfamily. Ser/Thr protein kinase family.

The enzyme catalyses L-seryl-[protein] + ATP = O-phospho-L-seryl-[protein] + ADP + H(+). It catalyses the reaction L-threonyl-[protein] + ATP = O-phospho-L-threonyl-[protein] + ADP + H(+). The sequence is that of Probable serine/threonine-protein kinase irlD (irlD) from Dictyostelium discoideum (Social amoeba).